The sequence spans 95 residues: Feather keratin B-4 (95 aa).

Position 1 is an N-acetylserine (S1).

It belongs to the avian keratin family. As to quaternary structure, the avian keratins (F-ker, S-ker, C-ker and B-ker) are a complex mixture of very similar polypeptides.

This chain is Feather keratin B-4, found in Columba livia (Rock dove).